The primary structure comprises 202 residues: dTTP/UTP pyrophosphatase (202 aa).

The active-site Proton acceptor is the aspartate 76.

This sequence belongs to the Maf family. YhdE subfamily. A divalent metal cation is required as a cofactor.

The protein resides in the cytoplasm. It carries out the reaction dTTP + H2O = dTMP + diphosphate + H(+). The enzyme catalyses UTP + H2O = UMP + diphosphate + H(+). Its function is as follows. Nucleoside triphosphate pyrophosphatase that hydrolyzes dTTP and UTP. May have a dual role in cell division arrest and in preventing the incorporation of modified nucleotides into cellular nucleic acids. In Neisseria gonorrhoeae (strain ATCC 700825 / FA 1090), this protein is dTTP/UTP pyrophosphatase.